Consider the following 192-residue polypeptide: Imidazoleglycerol-phosphate dehydratase (192 aa).

It belongs to the imidazoleglycerol-phosphate dehydratase family.

The protein resides in the cytoplasm. It catalyses the reaction D-erythro-1-(imidazol-4-yl)glycerol 3-phosphate = 3-(imidazol-4-yl)-2-oxopropyl phosphate + H2O. It participates in amino-acid biosynthesis; L-histidine biosynthesis; L-histidine from 5-phospho-alpha-D-ribose 1-diphosphate: step 6/9. The polypeptide is Imidazoleglycerol-phosphate dehydratase (Staphylococcus aureus (strain JH9)).